Reading from the N-terminus, the 264-residue chain is Phosphatidylglycerol--prolipoprotein diacylglyceryl transferase (264 aa).

A run of 3 helical transmembrane segments spans residues 17–37, 59–79, and 95–115; these read LAIH…LWLA, LLFY…VLFY, and WKGG…MALF. Residue arginine 142 participates in a 1,2-diacyl-sn-glycero-3-phospho-(1'-sn-glycerol) binding. 2 consecutive transmembrane segments (helical) span residues 205–225 and 241–261; these read GQVS…AEYF and MGQW…VWAG.

Belongs to the Lgt family.

The protein resides in the cell inner membrane. It carries out the reaction L-cysteinyl-[prolipoprotein] + a 1,2-diacyl-sn-glycero-3-phospho-(1'-sn-glycerol) = an S-1,2-diacyl-sn-glyceryl-L-cysteinyl-[prolipoprotein] + sn-glycerol 1-phosphate + H(+). The protein operates within protein modification; lipoprotein biosynthesis (diacylglyceryl transfer). Its function is as follows. Catalyzes the transfer of the diacylglyceryl group from phosphatidylglycerol to the sulfhydryl group of the N-terminal cysteine of a prolipoprotein, the first step in the formation of mature lipoproteins. The protein is Phosphatidylglycerol--prolipoprotein diacylglyceryl transferase of Methylibium petroleiphilum (strain ATCC BAA-1232 / LMG 22953 / PM1).